The primary structure comprises 348 residues: Histidinol-phosphate aminotransferase (348 aa).

Lys207 is subject to N6-(pyridoxal phosphate)lysine.

Belongs to the class-II pyridoxal-phosphate-dependent aminotransferase family. Histidinol-phosphate aminotransferase subfamily. Homodimer. It depends on pyridoxal 5'-phosphate as a cofactor.

The enzyme catalyses L-histidinol phosphate + 2-oxoglutarate = 3-(imidazol-4-yl)-2-oxopropyl phosphate + L-glutamate. Its pathway is amino-acid biosynthesis; L-histidine biosynthesis; L-histidine from 5-phospho-alpha-D-ribose 1-diphosphate: step 7/9. The chain is Histidinol-phosphate aminotransferase from Rippkaea orientalis (strain PCC 8801 / RF-1) (Cyanothece sp. (strain PCC 8801)).